Here is a 471-residue protein sequence, read N- to C-terminus: Glutamate--tRNA ligase (471 aa).

A 'HIGH' region motif is present at residues 9–19 (PSPTGYLHVGG). Zn(2+) contacts are provided by Cys-98, Cys-100, Cys-125, and His-127. The 'KMSKS' region motif lies at 237–241 (KLSKR). Lys-240 provides a ligand contact to ATP.

Belongs to the class-I aminoacyl-tRNA synthetase family. Glutamate--tRNA ligase type 1 subfamily. In terms of assembly, monomer. It depends on Zn(2+) as a cofactor.

Its subcellular location is the cytoplasm. It carries out the reaction tRNA(Glu) + L-glutamate + ATP = L-glutamyl-tRNA(Glu) + AMP + diphosphate. Catalyzes the attachment of glutamate to tRNA(Glu) in a two-step reaction: glutamate is first activated by ATP to form Glu-AMP and then transferred to the acceptor end of tRNA(Glu). In Enterobacter sp. (strain 638), this protein is Glutamate--tRNA ligase.